A 985-amino-acid chain; its full sequence is Rho guanine nucleotide exchange factor 2 (985 aa).

The tract at residues 1–32 (MSRIESLTRARIDRSKEQATKTREKEKMKEAK) is disordered. The segment at 39–86 (GHLFTTISVSGMTMCYACNKSITAKEALICPTCNVTIHNRCKDTLANC) adopts a Phorbol-ester/DAG-type zinc-finger fold. Ser-109, Ser-122, Ser-129, Ser-133, and Ser-137 each carry phosphoserine. The interval 131–161 (RQSLLGSRRGLSSLSLAKSVSTTNIAGHFND) is interaction with DYNLT1. Position 143 is a phosphoserine; by PAK4 (Ser-143). Ser-151, Ser-163, Ser-172, Ser-174, and Ser-177 each carry phosphoserine. Residues 236 to 433 (KKQDVIYELI…KELLSNVDQD (198 aa)) enclose the DH domain. Position 354 is an N6-acetyllysine (Lys-354). One can recognise a PH domain in the interval 473–572 (KLIHDGCLLW…WIRVIQQSVR (100 aa)). Residues 591–615 (LRRIKTKLQQKNQALVELLQMNVEL) are a coiled coil. Phosphoserine occurs at positions 646 and 649. Position 680 is a phosphothreonine; by MAPK1 or MAPK3 (Thr-680). Phosphoserine is present on residues Ser-692, Ser-710, and Ser-781. Residue Thr-795 is modified to Phosphothreonine. A coiled-coil region spans residues 797 to 866 (EKQATELALL…RQLAALGQNE (70 aa)). Ser-885 is modified (phosphoserine). Disordered stretches follow at residues 890 to 909 (DALYLSFNPPQPSRGHDRLD) and 918 to 985 (HRPF…ASES). Phosphotyrosine is present on Tyr-893. Ser-895 carries the post-translational modification Phosphoserine; by PAK4. A compositionally biased stretch (basic and acidic residues) spans 919 to 938 (RPFDDREAQELGSPEDRLQD). A phosphoserine mark is found at Ser-931, Ser-939, and Ser-940. Residues 940–949 (SDPDTCSEEE) are compositionally biased toward acidic residues. At Thr-944 the chain carries Phosphothreonine. Phosphoserine is present on residues Ser-946, Ser-951, Ser-952, Ser-955, and Ser-959.

As to quaternary structure, found in a complex composed at least of ARHGEF2, NOD2 and RIPK2. Interacts with RIPK2; the interaction mediates tyrosine phosphorylation of RIPK2 by Src kinase CSK. Interacts with RIPK1 and RIPK3. Interacts with YWHAZ/14-3-3 zeta; when phosphorylated at Ser-885. Interacts with the kinases PAK4, AURKA and MAPK1. Interacts with RHOA and RAC1. Interacts with NOD1. Interacts (via the N- terminal zinc finger) with CAPN6 (via domain II). Interacts with DYNLT1. Post-translationally, phosphorylation of Ser-885 by PAK1 induces binding to protein YWHAZ, promoting its relocation to microtubules and the inhibition of its activity. Phosphorylated by AURKA and CDK1 during mitosis, which negatively regulates its activity. Phosphorylation by MAPK1 or MAPK3 increases nucleotide exchange activity. Phosphorylation by PAK4 releases GEF-H1 from the microtubules. Phosphorylated on serine, threonine and tyrosine residues in a RIPK2-dependent manner.

Its subcellular location is the cytoplasm. It localises to the cytoskeleton. It is found in the cell junction. The protein localises to the tight junction. The protein resides in the golgi apparatus. Its subcellular location is the spindle. It localises to the cytoplasmic vesicle. Functionally, activates Rho-GTPases by promoting the exchange of GDP for GTP. May be involved in epithelial barrier permeability, cell motility and polarization, dendritic spine morphology, antigen presentation, leukemic cell differentiation, cell cycle regulation, innate immune response, and cancer. Binds Rac-GTPases, but does not seem to promote nucleotide exchange activity toward Rac-GTPases. May stimulate instead the cortical activity of Rac. Inactive toward CDC42, TC10, or Ras-GTPases. Forms an intracellular sensing system along with NOD1 for the detection of microbial effectors during cell invasion by pathogens. Involved in innate immune signaling transduction pathway promoting cytokine IL6/interleukin-6 and TNF-alpha secretion in macrophage upon stimulation by bacterial peptidoglycans; acts as a signaling intermediate between NOD2 receptor and RIPK2 kinase. Contributes to the tyrosine phosphorylation of RIPK2 through Src tyrosine kinase leading to NF-kappaB activation by NOD2. Overexpression activates Rho-, but not Rac-GTPases, and increases paracellular permeability. Involved in neuronal progenitor cell division and differentiation. Involved in the migration of precerebellar neurons. The protein is Rho guanine nucleotide exchange factor 2 (Arhgef2) of Rattus norvegicus (Rat).